Reading from the N-terminus, the 85-residue chain is MYTYLMLTMRTEKFNQEHVAGHYEFLDRLQAEKRLKMFGPFSDATGGAYVIEADSLEEAAEIGHADPLVASGSSELTIKEWKLKK.

Belongs to the YciI family.

This is an uncharacterized protein from Bacillus subtilis (strain 168).